The primary structure comprises 706 residues: Elongation factor G (706 aa).

The tr-type G domain maps to 15–291; that stretch reads LKTRNIGISA…GVLDYLASPV (277 aa). Residues 24–31, 91–95, and 145–148 contribute to the GTP site; these read AHIDSGKT, DTPGH, and NKLD.

Belongs to the TRAFAC class translation factor GTPase superfamily. Classic translation factor GTPase family. EF-G/EF-2 subfamily.

It localises to the cytoplasm. Catalyzes the GTP-dependent ribosomal translocation step during translation elongation. During this step, the ribosome changes from the pre-translocational (PRE) to the post-translocational (POST) state as the newly formed A-site-bound peptidyl-tRNA and P-site-bound deacylated tRNA move to the P and E sites, respectively. Catalyzes the coordinated movement of the two tRNA molecules, the mRNA and conformational changes in the ribosome. The protein is Elongation factor G of Leptospira borgpetersenii serovar Hardjo-bovis (strain L550).